The primary structure comprises 90 residues: Barrier-to-autointegration factor (90 aa).

A phosphoserine mark is found at serine 2 and serine 3. Position 4 is a phosphothreonine (threonine 4). Serine 5 is modified (phosphoserine).

The protein belongs to the BAF family. In terms of assembly, homodimer.

It localises to the nucleus. It is found in the chromosome. The protein resides in the nucleus envelope. The protein localises to the cytoplasm. Functionally, non-specific DNA-binding protein that plays key roles in mitotic nuclear reassembly, chromatin organization, DNA damage response, gene expression and intrinsic immunity against foreign DNA. Contains two non-specific double-stranded DNA (dsDNA)-binding sites which promote DNA cross-bridging. Plays a key role in nuclear membrane reformation at the end of mitosis by driving formation of a single nucleus in a spindle-independent manner. Transiently cross-bridges anaphase chromosomes via its ability to bridge distant DNA sites, leading to the formation of a dense chromatin network at the chromosome ensemble surface that limits membranes to the surface. Also acts as a negative regulator of innate immune activation by restricting CGAS activity toward self-DNA upon acute loss of nuclear membrane integrity. Outcompetes CGAS for DNA-binding, thereby preventing CGAS activation and subsequent damaging autoinflammatory responses. Also involved in DNA damage response; acts by inhibiting the ADP-ribosyltransferase activity of PARP1. Involved in the recognition of exogenous dsDNA in the cytosol: associates with exogenous dsDNA immediately after its appearance in the cytosol at endosome breakdown and is required to avoid autophagy. The chain is Barrier-to-autointegration factor (banf1) from Danio rerio (Zebrafish).